Here is a 357-residue protein sequence, read N- to C-terminus: Membrane-bound lytic murein transglycosylase C (357 aa).

Residues 1–15 (MKKYLLLALLPFLYA) form the signal peptide. C16 carries N-palmitoyl cysteine lipidation. C16 is lipidated: S-diacylglycerol cysteine.

Belongs to the transglycosylase Slt family.

The protein resides in the cell outer membrane. The enzyme catalyses Exolytic cleavage of the (1-&gt;4)-beta-glycosidic linkage between N-acetylmuramic acid (MurNAc) and N-acetylglucosamine (GlcNAc) residues in peptidoglycan, from either the reducing or the non-reducing ends of the peptidoglycan chains, with concomitant formation of a 1,6-anhydrobond in the MurNAc residue.. Its function is as follows. Murein-degrading enzyme. May play a role in recycling of muropeptides during cell elongation and/or cell division. This chain is Membrane-bound lytic murein transglycosylase C, found in Haemophilus influenzae (strain PittEE).